The primary structure comprises 692 residues: Methionine--tRNA ligase (692 aa).

The short motif at 26–36 (PYANGSIHLGH) is the 'HIGH' region element. Residues cysteine 157, cysteine 160, cysteine 170, and cysteine 173 each coordinate Zn(2+). The 'KMSKS' region motif lies at 342–346 (KMSKS). Residue lysine 345 participates in ATP binding. The region spanning 590 to 692 (DFAKVDLRIA…SGAQPGMRVK (103 aa)) is the tRNA-binding domain.

It belongs to the class-I aminoacyl-tRNA synthetase family. MetG type 1 subfamily. In terms of assembly, homodimer. Zn(2+) is required as a cofactor.

The protein resides in the cytoplasm. It catalyses the reaction tRNA(Met) + L-methionine + ATP = L-methionyl-tRNA(Met) + AMP + diphosphate. Its function is as follows. Is required not only for elongation of protein synthesis but also for the initiation of all mRNA translation through initiator tRNA(fMet) aminoacylation. This chain is Methionine--tRNA ligase, found in Methylobacillus flagellatus (strain ATCC 51484 / DSM 6875 / VKM B-1610 / KT).